The primary structure comprises 454 residues: Protoheme IX farnesyltransferase 1 (454 aa).

The tract at residues 1–186 is unknown; sequence MRTTGFSGLL…AYFELTKPRL (186 aa). The next 4 membrane-spanning stretches (helical) occupy residues 9 to 29, 59 to 79, 87 to 107, and 113 to 133; these read LLSA…TAAL, GVAA…WSET, LALA…VATG, and LHLF…AWHL. A disordered region spans residues 137 to 164; the sequence is TGSDDAPESPPELAPPVDEEPAATEQPA. Helical transmembrane passes span 186 to 206, 209 to 229, 251 to 271, 276 to 296, 300 to 320, 321 to 341, 377 to 397, 398 to 418, and 433 to 453; these read LMWL…TPTV, VVFT…FNHV, VPVA…LWAF, LLAA…YTLI, NTVQ…LIGY, AAVT…IFLW, HIVF…AVTD, LGWL…WAVV, and FHAS…DSLA. The tract at residues 187–451 is protoheme IX prenyltransferase; it reads MWLLCLVAGA…LVLVAILIDS (265 aa).

It in the C-terminal section; belongs to the UbiA prenyltransferase family. Protoheme IX farnesyltransferase subfamily.

Its subcellular location is the cell membrane. The catalysed reaction is heme b + (2E,6E)-farnesyl diphosphate + H2O = Fe(II)-heme o + diphosphate. Its pathway is porphyrin-containing compound metabolism; heme O biosynthesis; heme O from protoheme: step 1/1. Converts heme B (protoheme IX) to heme O by substitution of the vinyl group on carbon 2 of heme B porphyrin ring with a hydroxyethyl farnesyl side group. This chain is Protoheme IX farnesyltransferase 1 (ctaB1), found in Natronomonas pharaonis (strain ATCC 35678 / DSM 2160 / CIP 103997 / JCM 8858 / NBRC 14720 / NCIMB 2260 / Gabara) (Halobacterium pharaonis).